Reading from the N-terminus, the 289-residue chain is MKLKTRLILSGTILISLAACYFLVLLVLDLEITRDLMTDYVDPRPLQTSYHKLCVIVPYRDRLEELREFSPHMSKFLHNQNVSHHILIINQTDPLRFNRASLINVGWNEADRLGCDYMVMNDVDLLPVNPEVPYDFPGIGVIRHITSPQYHPKYHYEKFIGGILMLTLKDYKKLNGMSNKYWGWGLEDDEFYLRIIDSKLNLTRVSGLSTDSSNTFRHIHGPKRKRDYTPKKNDKNQWEIKRKRDHVSGLHDVRYLIDSRQLLDFSGTSVTIINVALHCDLNWTPYCKS.

The Cytoplasmic portion of the chain corresponds to 1–6; sequence MKLKTR. The chain crosses the membrane as a helical; Signal-anchor for type II membrane protein span at residues 7–27; the sequence is LILSGTILISLAACYFLVLLV. At 28 to 289 the chain is on the lumenal side; the sequence is LDLEITRDLM…DLNWTPYCKS (262 aa). Residue 58 to 62 participates in UDP-alpha-D-galactose binding; sequence PYRDR. N-linked (GlcNAc...) asparagine glycans are attached at residues Asn-81 and Asn-90. Residues 97-99, 123-124, Tyr-154, and Trp-184 contribute to the UDP-alpha-D-galactose site; these read FNR and VD. Asp-124 lines the Mn(2+) pocket. N-acetyl-D-glucosamine is bound at residue 186-189; the sequence is LEDD. Asn-201 is a glycosylation site (N-linked (GlcNAc...) asparagine). The disordered stretch occupies residues 214–236; it reads NTFRHIHGPKRKRDYTPKKNDKN. Positions 217 to 226 are enriched in basic residues; it reads RHIHGPKRKR. A Mn(2+)-binding site is contributed by His-218. 218-220 serves as a coordination point for UDP-alpha-D-galactose; it reads HIH. Over residues 227 to 236 the composition is skewed to basic and acidic residues; the sequence is DYTPKKNDKN.

It belongs to the glycosyltransferase 7 family. Requires Mn(2+) as cofactor.

Its subcellular location is the membrane. The enzyme catalyses 3-O-(beta-D-xylosyl)-L-seryl-[protein] + UDP-alpha-D-galactose = 3-O-(beta-D-galactosyl-(1-&gt;4)-beta-D-xylosyl)-L-seryl-[protein] + UDP + H(+). It functions in the pathway protein modification; protein glycosylation. Its function is as follows. Glycosyltransferase required for the biosynthesis of the tetrasaccharide (GlcA-Gal-Gal-Xyl-)Ser core linker of heparan sulfate and chondroitin sulfate. Required for embryonic development. Involved in vulval epithelium invagination. Required for axon regeneration after injury. This Caenorhabditis elegans protein is Xylosylprotein 4-beta-galactosyltransferase (sqv-3).